The sequence spans 183 residues: Pentapeptide repeat protein MfpA (183 aa).

The Pentapeptide repeat domain maps to 113 to 147 (SLVDTDLRKCVLRGADLSGARTTGARLDDADLRGA).

It belongs to the pentapeptide repeat protein family. As to quaternary structure, homodimer. Probably interacts with DNA gyrase.

In terms of biological role, might be involved in fluoroquinolone resistance. Inhibits ATP-independent DNA relaxation, ATP-dependent DNA supercoiling and ATP-dependent decatenation by endogenous gyrase, 50% inhibition occurs at 2 uM; inhibition is abolished if GyrA is mutated (Asp-87 to Gly or His). Also inhibits fluoroquinolone-promoted dsDNA cleavage. Increases fluoroquinolone (ciprofloxacin or moxifloxacin) inhibition of gyrase supercoiling activity in a concentration-dependent manner. Inhibits DNA relaxation and supercoiling by E.coli gyrase. Forms a structure that exhibits size, shape and electrostatic similarity to B-form DNA; it may bind to DNA gyrase which is postulated to protect it from fluoroquinolones. This is Pentapeptide repeat protein MfpA from Mycobacterium tuberculosis (strain ATCC 25618 / H37Rv).